Consider the following 270-residue polypeptide: Phthiotriol/phenolphthiotriol dimycocerosates methyltransferase (270 aa).

The protein belongs to the methyltransferase superfamily. Phthiotriol/phenolphthiotriol dimycocerosates methyltransferase family.

Functionally, catalyzes the methylation of the lipid moiety of the intermediate compounds phthiotriol and glycosylated phenolphthiotriol dimycoserosates to form phthiocerol dimycocerosates (DIM A) and glycosylated phenolphthiocerol dimycocerosates (PGL). In Mycobacterium leprae (strain TN), this protein is Phthiotriol/phenolphthiotriol dimycocerosates methyltransferase.